The primary structure comprises 548 residues: BTB/POZ domain-containing protein At5g17580 (548 aa).

A BTB domain is found at 7 to 74 (SDLHINVKGV…CNGSEFKFTS (68 aa)). An NPH3 domain is found at 180–442 (DWKSEDLITI…VNVLCVSQLQ (263 aa)). Residue Tyr-383 is modified to Phosphotyrosine. Residues 442 to 493 (QIRDTVAKEIKGMEEKVDEEEEEEIEVSSDEDEMEKMSNKLLGLEIENDECV) adopt a coiled-coil conformation.

It belongs to the NPH3 family.

Its pathway is protein modification; protein ubiquitination. In terms of biological role, may act as a substrate-specific adapter of an E3 ubiquitin-protein ligase complex (CUL3-RBX1-BTB) which mediates the ubiquitination and subsequent proteasomal degradation of target proteins. In Arabidopsis thaliana (Mouse-ear cress), this protein is BTB/POZ domain-containing protein At5g17580.